The following is a 145-amino-acid chain: D-aminoacyl-tRNA deacylase (145 aa).

The Gly-cisPro motif, important for rejection of L-amino acids motif lies at 137–138; the sequence is GP.

It belongs to the DTD family. In terms of assembly, homodimer.

It is found in the cytoplasm. The enzyme catalyses glycyl-tRNA(Ala) + H2O = tRNA(Ala) + glycine + H(+). The catalysed reaction is a D-aminoacyl-tRNA + H2O = a tRNA + a D-alpha-amino acid + H(+). Functionally, an aminoacyl-tRNA editing enzyme that deacylates mischarged D-aminoacyl-tRNAs. Also deacylates mischarged glycyl-tRNA(Ala), protecting cells against glycine mischarging by AlaRS. Acts via tRNA-based rather than protein-based catalysis; rejects L-amino acids rather than detecting D-amino acids in the active site. By recycling D-aminoacyl-tRNA to D-amino acids and free tRNA molecules, this enzyme counteracts the toxicity associated with the formation of D-aminoacyl-tRNA entities in vivo and helps enforce protein L-homochirality. This chain is D-aminoacyl-tRNA deacylase, found in Shewanella sp. (strain ANA-3).